A 381-amino-acid polypeptide reads, in one-letter code: Cytochrome b (381 aa).

Helical transmembrane passes span 32–52, 76–98, 113–133, and 179–199; these read GGSL…LLAM, MILR…LHVL, VWIS…IGYV, and FYSF…FHIA. Heme b-binding residues include His82 and His96. Residues His183 and His197 each coordinate heme b. His202 is a binding site for a ubiquinone. 4 consecutive transmembrane segments (helical) span residues 225–245, 289–309, 318–338, and 345–365; these read FGAK…ILVF, AMGV…PFIG, ITEW…WLGG, and TSFV…VCQP.

Belongs to the cytochrome b family. In terms of assembly, the main subunits of complex b-c1 are: cytochrome b, cytochrome c1 and the Rieske protein. Heme b serves as cofactor.

It localises to the mitochondrion inner membrane. Its function is as follows. Component of the ubiquinol-cytochrome c reductase complex (complex III or cytochrome b-c1 complex) that is part of the mitochondrial respiratory chain. The b-c1 complex mediates electron transfer from ubiquinol to cytochrome c. Contributes to the generation of a proton gradient across the mitochondrial membrane that is then used for ATP synthesis. The polypeptide is Cytochrome b (MT-CYB) (Chlamydomonas reinhardtii (Chlamydomonas smithii)).